Here is a 105-residue protein sequence, read N- to C-terminus: Fluoride-specific ion channel FluC (105 aa).

A run of 3 helical transmembrane segments spans residues 14–34 (FPLP…VFVV), 44–64 (LSPL…AFSL), and 79–99 (ALYV…GLWL). Na(+) contacts are provided by G54 and T57.

This sequence belongs to the fluoride channel Fluc/FEX (TC 1.A.43) family.

It is found in the cell inner membrane. The catalysed reaction is fluoride(in) = fluoride(out). With respect to regulation, na(+) is not transported, but it plays an essential structural role and its presence is essential for fluoride channel function. In terms of biological role, fluoride-specific ion channel. Important for reducing fluoride concentration in the cell, thus reducing its toxicity. This is Fluoride-specific ion channel FluC from Jannaschia sp. (strain CCS1).